The chain runs to 720 residues: Fatty acid oxidation complex subunit alpha (720 aa).

Positions 1–189 (MIYQGETLSV…KLGLVDAVVA (189 aa)) are enoyl-CoA hydratase/isomerase. Residue D296 participates in substrate binding. The segment at 311–720 (QPTKKGVVLG…ESYYTQQVNA (410 aa)) is 3-hydroxyacyl-CoA dehydrogenase. NAD(+)-binding positions include M324, D343, 400–402 (VVE), K407, and S429. Residue H450 is the For 3-hydroxyacyl-CoA dehydrogenase activity of the active site. NAD(+) is bound at residue N453. Substrate-binding residues include N500 and Y660.

In the N-terminal section; belongs to the enoyl-CoA hydratase/isomerase family. It in the C-terminal section; belongs to the 3-hydroxyacyl-CoA dehydrogenase family. As to quaternary structure, heterotetramer of two alpha chains (FadB) and two beta chains (FadA).

It catalyses the reaction a (3S)-3-hydroxyacyl-CoA + NAD(+) = a 3-oxoacyl-CoA + NADH + H(+). The catalysed reaction is a (3S)-3-hydroxyacyl-CoA = a (2E)-enoyl-CoA + H2O. It carries out the reaction a 4-saturated-(3S)-3-hydroxyacyl-CoA = a (3E)-enoyl-CoA + H2O. The enzyme catalyses (3S)-3-hydroxybutanoyl-CoA = (3R)-3-hydroxybutanoyl-CoA. It catalyses the reaction a (3Z)-enoyl-CoA = a 4-saturated (2E)-enoyl-CoA. The catalysed reaction is a (3E)-enoyl-CoA = a 4-saturated (2E)-enoyl-CoA. It functions in the pathway lipid metabolism; fatty acid beta-oxidation. Its function is as follows. Involved in the aerobic and anaerobic degradation of long-chain fatty acids via beta-oxidation cycle. Catalyzes the formation of 3-oxoacyl-CoA from enoyl-CoA via L-3-hydroxyacyl-CoA. It can also use D-3-hydroxyacyl-CoA and cis-3-enoyl-CoA as substrate. The protein is Fatty acid oxidation complex subunit alpha of Photobacterium profundum (strain SS9).